Reading from the N-terminus, the 581-residue chain is Arginine--tRNA ligase (581 aa).

Residues 126-136 (PNLAKEMHVGH) carry the 'HIGH' region motif.

Belongs to the class-I aminoacyl-tRNA synthetase family. In terms of assembly, monomer.

Its subcellular location is the cytoplasm. It catalyses the reaction tRNA(Arg) + L-arginine + ATP = L-arginyl-tRNA(Arg) + AMP + diphosphate. The polypeptide is Arginine--tRNA ligase (Shewanella pealeana (strain ATCC 700345 / ANG-SQ1)).